Here is a 467-residue protein sequence, read N- to C-terminus: AYNALAPKGAPNSCEWEQEEPTQEMAGELEDEEEAEEEEAEEEAEAPQAGQKVKKTHVYAQAPLAGEKITANGLQIVSDTQTEGNPVFADPTYQPEPQVGESQWNEAEATAIGGRVLKKTTPMKPCYGSYARPTNKNGGQGILVANNQGALESKVEMQFFAPSGTAMNERNAVQPSIVLYSEDVNMETPDTHISYKPSKTDENSKAMLGQQAMPNRPNYIAFRDNFIGLMYYNSTGNMGVLAGQASQLNAVVDLQDRNTELSYQLLLDSIGDRTRYFSMWNQAVDSYDPDVRIIENHGTEDELPNYCFPLGGIGVTDTYQGIKSNGNGNPQNWTKNDDFAARNEIGVGNNFALEINLNANLWRNFLYSNIALYLPDKLKYTPTNVEISPNPNSYDYMNKRVVAPGLVDCYINLGARWSLDYMENVNPFNHHRNAGLRYRSMLLGNGRYVPFHIQVPQKFFAIKNLLL.

Positions Ala1–Lys54 are disordered. Acidic residues predominate over residues Trp16–Glu45.

The protein belongs to the adenoviridae hexon protein family. As to quaternary structure, homotrimer. Interacts with the capsid vertex protein; this interaction binds the peripentonal hexons to the neighboring penton base. Interacts with the hexon-linking protein; this interaction tethers the hexons surrounding the penton to those situated in the central plate of the facet. Interacts with the hexon-interlacing protein; this interaction lashes the hexons together. Interacts with host dyneins DYNC1LI1 and DYNC1I2; this interaction might be involved in intracellular microtubule-dependent transport of incoming viral capsid. Interacts with the shutoff protein; this interaction allows folding and formation of hexons trimers. Interacts with pre-protein VI; this interaction probably allows nuclear import of hexon trimers and possibly pre-capsid assembly.

The protein localises to the virion. It localises to the host nucleus. Major capsid protein that self-associates to form 240 hexon trimers, each in the shape of a hexagon, building most of the pseudo T=25 capsid. Assembled into trimeric units with the help of the chaperone shutoff protein. Transported by pre-protein VI to the nucleus where it associates with other structural proteins to form an empty capsid. Might be involved, through its interaction with host dyneins, in the intracellular microtubule-dependent transport of incoming viral capsid to the nucleus. This chain is Hexon protein, found in Homo sapiens (Human).